Consider the following 284-residue polypeptide: Proteasome subunit beta 1 (284 aa).

Residues 1-54 (MAQRDTGGRLGAEFFTPGDSSFTAFLAAHRPALLSTRGLLPDGVRAAPDRVPHG) constitute a propeptide, removed in mature form; by autocatalysis. The Nucleophile role is filled by Thr55. A compositionally biased stretch (basic and acidic residues) spans 256 to 277 (RLPESETEDLSREMVEQRHTRP). Positions 256 to 284 (RLPESETEDLSREMVEQRHTRPDGPTAAM) are disordered.

It belongs to the peptidase T1B family. The 20S proteasome core is composed of 14 alpha and 14 beta subunits that assemble into four stacked heptameric rings, resulting in a barrel-shaped structure. The two inner rings, each composed of seven catalytic beta subunits, are sandwiched by two outer rings, each composed of seven alpha subunits. The catalytic chamber with the active sites is on the inside of the barrel. Has a gated structure, the ends of the cylinder being occluded by the N-termini of the alpha-subunits. Is capped by the proteasome-associated ATPase, ARC.

The protein resides in the cytoplasm. The catalysed reaction is Cleavage of peptide bonds with very broad specificity.. It participates in protein degradation; proteasomal Pup-dependent pathway. With respect to regulation, the formation of the proteasomal ATPase ARC-20S proteasome complex, likely via the docking of the C-termini of ARC into the intersubunit pockets in the alpha-rings, may trigger opening of the gate for substrate entry. Interconversion between the open-gate and close-gate conformations leads to a dynamic regulation of the 20S proteasome proteolysis activity. In terms of biological role, component of the proteasome core, a large protease complex with broad specificity involved in protein degradation. The chain is Proteasome subunit beta 1 from Streptomyces avermitilis (strain ATCC 31267 / DSM 46492 / JCM 5070 / NBRC 14893 / NCIMB 12804 / NRRL 8165 / MA-4680).